Consider the following 290-residue polypeptide: Ribosomal RNA small subunit methyltransferase H (290 aa).

S-adenosyl-L-methionine-binding positions include 35–37, Asp-54, Phe-81, Asp-97, and Gln-104; that span reads GGH.

This sequence belongs to the methyltransferase superfamily. RsmH family.

The protein resides in the cytoplasm. The enzyme catalyses cytidine(1402) in 16S rRNA + S-adenosyl-L-methionine = N(4)-methylcytidine(1402) in 16S rRNA + S-adenosyl-L-homocysteine + H(+). Specifically methylates the N4 position of cytidine in position 1402 (C1402) of 16S rRNA. This Picosynechococcus sp. (strain ATCC 27264 / PCC 7002 / PR-6) (Agmenellum quadruplicatum) protein is Ribosomal RNA small subunit methyltransferase H.